A 730-amino-acid chain; its full sequence is Elongation factor 2 (730 aa).

A tr-type G domain is found at valine 19 to isoleucine 260. GTP contacts are provided by residues alanine 28–threonine 35, aspartate 94–histidine 98, and asparagine 148–aspartate 151. At histidine 596 the chain carries Diphthamide.

The protein belongs to the TRAFAC class translation factor GTPase superfamily. Classic translation factor GTPase family. EF-G/EF-2 subfamily.

It localises to the cytoplasm. Catalyzes the GTP-dependent ribosomal translocation step during translation elongation. During this step, the ribosome changes from the pre-translocational (PRE) to the post-translocational (POST) state as the newly formed A-site-bound peptidyl-tRNA and P-site-bound deacylated tRNA move to the P and E sites, respectively. Catalyzes the coordinated movement of the two tRNA molecules, the mRNA and conformational changes in the ribosome. The chain is Elongation factor 2 (fusA) from Methanococcoides methylutens.